The following is a 130-amino-acid chain: Acidic phospholipase A2 daboiatoxin B chain (130 aa).

Positions 1 to 8 (MCLIGVEG) are cleaved as a signal peptide. 7 disulfide bridges follow: Cys34-Cys123, Cys36-Cys52, Cys51-Cys103, Cys57-Cys130, Cys58-Cys96, Cys65-Cys89, and Cys83-Cys94. Ca(2+) contacts are provided by Tyr35, Gly37, and Gly39. The active site involves His55. Asp56 provides a ligand contact to Ca(2+). Asp97 is an active-site residue.

The protein belongs to the phospholipase A2 family. Group II subfamily. D49 sub-subfamily. In terms of assembly, heterodimer of an acidic protein having phospholipase A2 activity (B chain) and an A chain which weakly inhibits the B chain enzymatic activity but potentiates its lethal potency. Ca(2+) is required as a cofactor. Expressed by the venom gland.

The protein resides in the secreted. It carries out the reaction a 1,2-diacyl-sn-glycero-3-phosphocholine + H2O = a 1-acyl-sn-glycero-3-phosphocholine + a fatty acid + H(+). In terms of biological role, monomer: Snake venom phospholipase A2 (PLA2) that shows a high PLA2 activity (2110 umol/min/mg). Heterodimer (A and B chains): snake venom phospholipase A2 that shows a moderate PLA2 activity (1377 umol/min/mg). Acts as a presynaptic neurotoxin. In vivo, induces edema and produces neurotoxic symptoms in mice. It exhibits indirect hemolysis and a strong myonecrotic activity and is cytotoxic. PLA2 catalyzes the calcium-dependent hydrolysis of the 2-acyl groups in 3-sn-phosphoglycerides. The protein is Acidic phospholipase A2 daboiatoxin B chain of Daboia siamensis (Eastern Russel's viper).